An 870-amino-acid chain; its full sequence is MDLQRHPIPFAWLDRDKVERLTDFLSNLERLDNVDLREHPHVTNSCVVREGDDVDDLKTLYNLLVLWLMYHYVLSKRKPDYNAIWQDITKLQSVVNEYLNSKGLNKGIFENMFTNKEKFESQFSDINRALLRLGNFIKWGSNVAIDTPYVNLTAEDSSEIENNLQDAEKNMLWYTVYNINDPWDENGYLITSINKLIYLGKLFLALTQSWSKLEKVAMSQIVITQNHLSGHLRRHDNFNIVYSHRVLQTPLTGQRVESFLKIITSDYDIIKSSLESHSASKAFSMSEIGPNSLMDFVPLRGDIHSNLTLPSMSIDTKKSSLDPARLKKSNSRSLDSFLRMQRQPKFLELDSVDNAGEKILLKEATLGGENVKATTPASSVSLMSGVESPSSFTSTNLDLPLSSFTSTNLDLRDKSHGNYKIGPSGILDFNVKFPPNAQLNTNGVDLLQDKTSIGSPSSGITDVVNGFANLNLHQNKSNVSPPWSRNTAANADFLDPVHRFVPEQTGTPFVLNNSDVAGSEAKHTTYSTETGVSPRNVFLIKDLRGKDGFRKQKQSDIPKSLTKERNDKAIMHSREVTGDSGDATETVGARNSPALRKIKQANDFFAGLNKKNDRDVLRGGKGNSKDLHSGGNAKKKEMSGKFNDDKEMTRNGQEPSRSLMGDARNAGDEQYIQAGLGQRVNNLLSQFTNLISLGEKGIEDILQNQRGTELKLATENKSGRESEEANVEKILEVSNPQDMFKNFRLQNDLDSVQSPFRLPDADLSRELDSASFKDALDLKLPGNGEREIDLALEKVKVGETETSDLKVGQDESFVPAQLMKVETPEEKDDIIEQMVLRIRQDGETDENTVSGPGVAESLDIEAKGESAIAS.

The segment covering 612 to 649 (NDRDVLRGGKGNSKDLHSGGNAKKKEMSGKFNDDKEMT) has biased composition (basic and acidic residues). 2 disordered regions span residues 612-662 (NDRD…LMGD) and 840-870 (QDGETDENTVSGPGVAESLDIEAKGESAIAS).

This sequence belongs to the herpesviridae large structural phosphoprotein family. In terms of processing, phosphorylated at multiple sites.

The protein localises to the virion tegument. This chain is Large structural phosphoprotein (U11), found in Human herpesvirus 6A (strain Uganda-1102) (HHV-6 variant A).